Here is a 238-residue protein sequence, read N- to C-terminus: 6-phosphogluconolactonase (238 aa).

It belongs to the glucosamine/galactosamine-6-phosphate isomerase family. 6-phosphogluconolactonase subfamily.

The enzyme catalyses 6-phospho-D-glucono-1,5-lactone + H2O = 6-phospho-D-gluconate + H(+). It functions in the pathway carbohydrate degradation; pentose phosphate pathway; D-ribulose 5-phosphate from D-glucose 6-phosphate (oxidative stage): step 2/3. In terms of biological role, hydrolysis of 6-phosphogluconolactone to 6-phosphogluconate. The polypeptide is 6-phosphogluconolactonase (pgl) (Mesorhizobium japonicum (strain LMG 29417 / CECT 9101 / MAFF 303099) (Mesorhizobium loti (strain MAFF 303099))).